A 919-amino-acid chain; its full sequence is Lipoxygenase 3, chloroplastic (919 aa).

The transit peptide at 1–52 (MALAKELMGYPLITERSSLVSSASHFKKRTQSTQFSINPFDRRPRKTKSGVV) directs the protein to the chloroplast. Residues 86 to 222 (VRAVVTVRNK…DHPDKRIFFT (137 aa)) enclose the PLAT domain. One can recognise a Lipoxygenase domain in the interval 225 to 919 (PYLPNETPSG…CRGVPNSVSI (695 aa)). Positions 272–310 (PDKSSELSRPKLGGKEVPYPRRCRTGRQSTVSDKDAESR) are disordered. Residues histidine 578, histidine 583, histidine 770, asparagine 774, and isoleucine 919 each coordinate Fe cation.

This sequence belongs to the lipoxygenase family. Requires Fe cation as cofactor. As to expression, expressed in roots and leaves.

Its subcellular location is the plastid. The protein localises to the chloroplast. The catalysed reaction is (9Z,12Z)-octadecadienoate + O2 = (13S)-hydroperoxy-(9Z,11E)-octadecadienoate. It carries out the reaction (9Z,12Z,15Z)-octadecatrienoate + O2 = (13S)-hydroperoxy-(9Z,11E,15Z)-octadecatrienoate. It functions in the pathway lipid metabolism; oxylipin biosynthesis. Functionally, 13S-lipoxygenase that can use linolenic acid as substrates. Plant lipoxygenases may be involved in a number of diverse aspects of plant physiology including growth and development, pest resistance, and senescence or responses to wounding. Catalyzes the hydroperoxidation of lipids containing a cis,cis-1,4-pentadiene structure. This chain is Lipoxygenase 3, chloroplastic (LOX3), found in Arabidopsis thaliana (Mouse-ear cress).